Here is a 253-residue protein sequence, read N- to C-terminus: Demethylmenaquinone methyltransferase (253 aa).

Residues threonine 62, aspartate 80, 102–103, and serine 119 each bind S-adenosyl-L-methionine; that span reads DA.

Belongs to the class I-like SAM-binding methyltransferase superfamily. MenG/UbiE family.

The enzyme catalyses a 2-demethylmenaquinol + S-adenosyl-L-methionine = a menaquinol + S-adenosyl-L-homocysteine + H(+). The protein operates within quinol/quinone metabolism; menaquinone biosynthesis; menaquinol from 1,4-dihydroxy-2-naphthoate: step 2/2. Methyltransferase required for the conversion of demethylmenaquinol (DMKH2) to menaquinol (MKH2). The polypeptide is Demethylmenaquinone methyltransferase (Paenarthrobacter aurescens (strain TC1)).